The primary structure comprises 204 residues: Ribonuclease HII (204 aa).

Positions 14–204 (QYICGVDEVG…SFKLSCLGEK (191 aa)) constitute an RNase H type-2 domain. Residues Asp-20, Glu-21, and Asp-116 each contribute to the a divalent metal cation site.

Belongs to the RNase HII family. Mn(2+) is required as a cofactor. It depends on Mg(2+) as a cofactor.

It localises to the cytoplasm. The enzyme catalyses Endonucleolytic cleavage to 5'-phosphomonoester.. In terms of biological role, endonuclease that specifically degrades the RNA of RNA-DNA hybrids. This is Ribonuclease HII from Chloroherpeton thalassium (strain ATCC 35110 / GB-78).